Consider the following 594-residue polypeptide: Cryptochrome-2 (594 aa).

Residues 21–150 form the Photolyase/cryptochrome alpha/beta domain; sequence ASSVHWFRKG…EVVTENSHTL (130 aa). Lys29 participates in a covalent cross-link: Glycyl lysine isopeptide (Lys-Gly) (interchain with G-Cter in ubiquitin). Position 89 is a phosphoserine (Ser89). Residues Lys125 and Lys241 each participate in a glycyl lysine isopeptide (Lys-Gly) (interchain with G-Cter in ubiquitin) cross-link. At Ser265 the chain carries Phosphoserine; by MAPK. Position 270 (Ser270) interacts with FAD. Ser298 is modified (phosphoserine). Gln307 contributes to the FAD binding site. Lys347 is covalently cross-linked (Glycyl lysine isopeptide (Lys-Gly) (interchain with G-Cter in ubiquitin)). FAD is bound by residues His373 and 405–407; that span reads DAD. The tract at residues 389–488 is required for inhibition of CLOCK-BMAL1-mediated transcription; the sequence is WVSWESGVRV…IIGVDYPRPI (100 aa). Residues Lys474 and Lys503 each participate in a glycyl lysine isopeptide (Lys-Gly) (interchain with G-Cter in ubiquitin) cross-link. Residues 532–594 are disordered; sequence VAEPGSSQAG…PAQEPPSKDS (63 aa). Over residues 536–547 the composition is skewed to polar residues; the sequence is GSSQAGSISNTG. Residue Ser553 is modified to Phosphoserine; by GSK3-beta. At Ser557 the chain carries Phosphoserine; by DYRK1A and MAPK.

This sequence belongs to the DNA photolyase class-1 family. As to quaternary structure, component of the circadian core oscillator, which includes the CRY proteins, CLOCK or NPAS2, BMAL1 or BMAL2, CSNK1D and/or CSNK1E, TIMELESS, and the PER proteins. Interacts with TIMELESS. Interacts directly with PER1, PER2 and PER3; interaction with PER2 inhibits its ubiquitination and vice versa. Interacts with CLOCK-BMAL1. Interacts with CLOCK. Interacts with BMAL1. Interacts with NFIL3. Interacts with FBXL3 and FBXL21. FBXL3, PER2 and the cofactor FAD compete for overlapping binding sites. FBXL3 cannot bind CRY2 that interacts already with PER2 or that contains bound FAD. Interacts with PPP5C (via TPR repeats); the interaction down-regulates the PPP5C phosphatase activity on CSNK1E. Interacts with nuclear receptors AR and NR3C1/GR; the interaction is ligand dependent. Interacts with PRKDC and CIART. Interacts with DDB1, USP7 and TARDBP. Interacts with HNF4A and PPARA. Interacts with PPARD (via domain NR LBD) and NR1I2 (via domain NR LBD) in a ligand-dependent manner. Interacts with PPARG, NR1I3 and VDR in a ligand-dependent manner. The cofactor is FAD. It depends on (6R)-5,10-methylene-5,6,7,8-tetrahydrofolate as a cofactor. Post-translationally, phosphorylation on Ser-265 by MAPK is important for the inhibition of CLOCK-BMAL1-mediated transcriptional activity. Phosphorylation by CSKNe requires interaction with PER1 or PER2. Phosphorylated in a circadian manner at Ser-553 and Ser-557 in the suprachiasmatic nucleus (SCN) and liver. Phosphorylation at Ser-557 by DYRK1A promotes subsequent phosphorylation at Ser-553 by GSK3-beta: the two-step phosphorylation at the neighboring Ser residues leads to its proteasomal degradation. Ubiquitinated by the SCF(FBXL3) and SCF(FBXL21) complexes, regulating the balance between degradation and stabilization. The SCF(FBXL3) complex is mainly nuclear and mediates ubiquitination and subsequent degradation of CRY2. In contrast, cytoplasmic SCF(FBXL21) complex-mediated ubiquitination leads to stabilize CRY2 and counteract the activity of the SCF(FBXL3) complex. The SCF(FBXL3) and SCF(FBXL21) complexes probably mediate ubiquitination at different Lys residues. The SCF(FBXL3) complex recognizes and binds CRY2 phosphorylated at Ser-553 and Ser-557. Ubiquitination may be inhibited by PER2. Deubiquitinated by USP7. In terms of tissue distribution, expressed in all tissues examined including heart, cerebellum, cerebral cortex, lung, liver, muscle, kidney and ovary. Highest levels in heart, liver and ovary. Highly expressed in the suprachiasmatic nucleus (SCN).

It is found in the cytoplasm. Its subcellular location is the nucleus. Functionally, transcriptional repressor which forms a core component of the circadian clock. The circadian clock, an internal time-keeping system, regulates various physiological processes through the generation of approximately 24 hour circadian rhythms in gene expression, which are translated into rhythms in metabolism and behavior. It is derived from the Latin roots 'circa' (about) and 'diem' (day) and acts as an important regulator of a wide array of physiological functions including metabolism, sleep, body temperature, blood pressure, endocrine, immune, cardiovascular, and renal function. Consists of two major components: the central clock, residing in the suprachiasmatic nucleus (SCN) of the brain, and the peripheral clocks that are present in nearly every tissue and organ system. Both the central and peripheral clocks can be reset by environmental cues, also known as Zeitgebers (German for 'timegivers'). The predominant Zeitgeber for the central clock is light, which is sensed by retina and signals directly to the SCN. The central clock entrains the peripheral clocks through neuronal and hormonal signals, body temperature and feeding-related cues, aligning all clocks with the external light/dark cycle. Circadian rhythms allow an organism to achieve temporal homeostasis with its environment at the molecular level by regulating gene expression to create a peak of protein expression once every 24 hours to control when a particular physiological process is most active with respect to the solar day. Transcription and translation of core clock components (CLOCK, NPAS2, BMAL1, BMAL2, PER1, PER2, PER3, CRY1 and CRY2) plays a critical role in rhythm generation, whereas delays imposed by post-translational modifications (PTMs) are important for determining the period (tau) of the rhythms (tau refers to the period of a rhythm and is the length, in time, of one complete cycle). A diurnal rhythm is synchronized with the day/night cycle, while the ultradian and infradian rhythms have a period shorter and longer than 24 hours, respectively. Disruptions in the circadian rhythms contribute to the pathology of cardiovascular diseases, cancer, metabolic syndromes and aging. A transcription/translation feedback loop (TTFL) forms the core of the molecular circadian clock mechanism. Transcription factors, CLOCK or NPAS2 and BMAL1 or BMAL2, form the positive limb of the feedback loop, act in the form of a heterodimer and activate the transcription of core clock genes and clock-controlled genes (involved in key metabolic processes), harboring E-box elements (5'-CACGTG-3') within their promoters. The core clock genes: PER1/2/3 and CRY1/2 which are transcriptional repressors form the negative limb of the feedback loop and interact with the CLOCK|NPAS2-BMAL1|BMAL2 heterodimer inhibiting its activity and thereby negatively regulating their own expression. This heterodimer also activates nuclear receptors NR1D1/2 and RORA/B/G, which form a second feedback loop and which activate and repress BMAL1 transcription, respectively. CRY1 and CRY2 have redundant functions but also differential and selective contributions at least in defining the pace of the SCN circadian clock and its circadian transcriptional outputs. Less potent transcriptional repressor in cerebellum and liver than CRY1, though less effective in lengthening the period of the SCN oscillator. Seems to play a critical role in tuning SCN circadian period by opposing the action of CRY1. With CRY1, dispensable for circadian rhythm generation but necessary for the development of intercellular networks for rhythm synchrony. May mediate circadian regulation of cAMP signaling and gluconeogenesis by blocking glucagon-mediated increases in intracellular cAMP concentrations and in CREB1 phosphorylation. Besides its role in the maintenance of the circadian clock, is also involved in the regulation of other processes. Plays a key role in glucose and lipid metabolism modulation, in part, through the transcriptional regulation of genes involved in these pathways, such as LEP or ACSL4. Represses glucocorticoid receptor NR3C1/GR-induced transcriptional activity by binding to glucocorticoid response elements (GREs). Represses the CLOCK-BMAL1 induced transcription of BHLHE40/DEC1 and NAMPT. Represses PPARD and its target genes in the skeletal muscle and limits exercise capacity. Represses the transcriptional activity of NR1I2. The protein is Cryptochrome-2 (Cry2) of Rattus norvegicus (Rat).